The primary structure comprises 520 residues: GMP synthase [glutamine-hydrolyzing] (520 aa).

In terms of domain architecture, Glutamine amidotransferase type-1 spans 12–205 (KIIVLDYGSQ…AISICGARGD (194 aa)). C89 functions as the Nucleophile in the catalytic mechanism. Active-site residues include H179 and E181. The region spanning 206–395 (WSMDNFIDME…LGMPEEIVWR (190 aa)) is the GMPS ATP-PPase domain. 233–239 (SGGVDSS) lines the ATP pocket.

Homodimer.

It catalyses the reaction XMP + L-glutamine + ATP + H2O = GMP + L-glutamate + AMP + diphosphate + 2 H(+). The protein operates within purine metabolism; GMP biosynthesis; GMP from XMP (L-Gln route): step 1/1. Functionally, catalyzes the synthesis of GMP from XMP. In Streptococcus pyogenes serotype M2 (strain MGAS10270), this protein is GMP synthase [glutamine-hydrolyzing].